We begin with the raw amino-acid sequence, 169 residues long: ATP synthase subunit b (169 aa).

The chain crosses the membrane as a helical span at residues 26 to 46 (FFFVLLIFLIVLGVIAKWVVP).

Belongs to the ATPase B chain family. F-type ATPases have 2 components, F(1) - the catalytic core - and F(0) - the membrane proton channel. F(1) has five subunits: alpha(3), beta(3), gamma(1), delta(1), epsilon(1). F(0) has three main subunits: a(1), b(2) and c(10-14). The alpha and beta chains form an alternating ring which encloses part of the gamma chain. F(1) is attached to F(0) by a central stalk formed by the gamma and epsilon chains, while a peripheral stalk is formed by the delta and b chains.

The protein resides in the cell membrane. F(1)F(0) ATP synthase produces ATP from ADP in the presence of a proton or sodium gradient. F-type ATPases consist of two structural domains, F(1) containing the extramembraneous catalytic core and F(0) containing the membrane proton channel, linked together by a central stalk and a peripheral stalk. During catalysis, ATP synthesis in the catalytic domain of F(1) is coupled via a rotary mechanism of the central stalk subunits to proton translocation. In terms of biological role, component of the F(0) channel, it forms part of the peripheral stalk, linking F(1) to F(0). This is ATP synthase subunit b from Mycobacterium sp. (strain JLS).